The primary structure comprises 146 residues: Transcriptional regulator MraZ (146 aa).

2 consecutive SpoVT-AbrB domains span residues 6-49 and 78-121; these read TYDH…TEEE and THEV…DQKS.

This sequence belongs to the MraZ family. In terms of assembly, forms oligomers.

It localises to the cytoplasm. Its subcellular location is the nucleoid. This chain is Transcriptional regulator MraZ, found in Mesoplasma florum (strain ATCC 33453 / NBRC 100688 / NCTC 11704 / L1) (Acholeplasma florum).